A 263-amino-acid chain; its full sequence is Endonuclease 8 (263 aa).

The active-site Schiff-base intermediate with DNA is the Pro2. Glu3 functions as the Proton donor in the catalytic mechanism. The active-site Proton donor; for beta-elimination activity is Lys53. DNA-binding residues include Gln70, Arg125, and Asn169. Residues 229–263 (KVFHRDGEACERCGGIIEKTTLSSRPFYWCPHCQK) form an FPG-type zinc finger. Arg253 acts as the Proton donor; for delta-elimination activity in catalysis.

It belongs to the FPG family. Zn(2+) is required as a cofactor.

It catalyses the reaction 2'-deoxyribonucleotide-(2'-deoxyribose 5'-phosphate)-2'-deoxyribonucleotide-DNA = a 3'-end 2'-deoxyribonucleotide-(2,3-dehydro-2,3-deoxyribose 5'-phosphate)-DNA + a 5'-end 5'-phospho-2'-deoxyribonucleoside-DNA + H(+). In terms of biological role, involved in base excision repair of DNA damaged by oxidation or by mutagenic agents. Acts as a DNA glycosylase that recognizes and removes damaged bases. Has a preference for oxidized pyrimidines, such as thymine glycol, 5,6-dihydrouracil and 5,6-dihydrothymine. Has AP (apurinic/apyrimidinic) lyase activity and introduces nicks in the DNA strand. Cleaves the DNA backbone by beta-delta elimination to generate a single-strand break at the site of the removed base with both 3'- and 5'-phosphates. The chain is Endonuclease 8 from Salmonella paratyphi B (strain ATCC BAA-1250 / SPB7).